Here is a 62-residue protein sequence, read N- to C-terminus: MSERQGAGTTNGKDKPSGENDGQKKVQEEFDIDMDAPETERAAVAIQSQFRKFQKKKAGSQS.

Residues 1–40 (MSERQGAGTTNGKDKPSGENDGQKKVQEEFDIDMDAPETE) form a disordered region. A compositionally biased stretch (basic and acidic residues) spans 12 to 28 (GKDKPSGENDGQKKVQE). The acidic; binds calcium and is required for modulating the calcium-binding kinetics of calmodulin stretch occupies residues 28 to 40 (EEFDIDMDAPETE). The region spanning 39–62 (TERAAVAIQSQFRKFQKKKAGSQS) is the IQ domain.

This sequence belongs to the PCP4 family. As to quaternary structure, binds to both calcium-free and calcium-bound calmodulin. The affinity for the calcium-bound form is 50-fold greater.

Functions as a modulator of calcium-binding by calmodulin. Thereby, regulates calmodulin activity and the different processes it controls. For instance, may play a role in neuronal differentiation through activation of calmodulin-dependent kinase signaling pathways. This is Calmodulin regulator protein PCP4 from Bos taurus (Bovine).